Consider the following 197-residue polypeptide: HTH-type transcriptional regulator BetI (197 aa).

The region spanning 8-68 (PIRRQQLIQA…ATMRHLMNAL (61 aa)) is the HTH tetR-type domain. A DNA-binding region (H-T-H motif) is located at residues 31-50 (SIALIARLAGVSNGIISHYF).

It functions in the pathway amine and polyamine biosynthesis; betaine biosynthesis via choline pathway [regulation]. Repressor involved in the biosynthesis of the osmoprotectant glycine betaine. It represses transcription of the choline transporter BetT and the genes of BetAB involved in the synthesis of glycine betaine. This is HTH-type transcriptional regulator BetI from Pseudomonas savastanoi pv. phaseolicola (strain 1448A / Race 6) (Pseudomonas syringae pv. phaseolicola (strain 1448A / Race 6)).